The following is a 660-amino-acid chain: Protein FAM161A (660 aa).

Coiled-coil stretches lie at residues 93-120 (EEYF…YQDK) and 296-320 (YHDL…ALLA). A required for interaction with CFAP418 region spans residues 341 to 525 (QLRDFLKYKK…PTVSSRGREQ (185 aa)). Residues Lys468 and Lys484 each participate in a glycyl lysine isopeptide (Lys-Gly) (interchain with G-Cter in SUMO2) cross-link. Residues 522–552 (GREQAVRKSEKERMREYQRELEEREEKLKKR) adopt a coiled-coil conformation. The interval 605–660 (KSVTEDKESFNEEEKIEERENGEENYFIDTNSQDSYKEKDEANEESEEEKSVEESH) is disordered. Residues 606-623 (SVTEDKESFNEEEKIEER) are compositionally biased toward basic and acidic residues. Residues 645 to 660 (EANEESEEEKSVEESH) are compositionally biased toward acidic residues.

This sequence belongs to the FAM161 family. In terms of assembly, interacts (via central region) with CFAP418 (via N-terminus); the interaction is direct. Interacts (via C-terminus) with microtubules. Interacts with LCA5. Interacts with CEP290. Interacts with SDCCAG8. Interacts with FAM161B. Interacts with POC1B. Interacts with CEP78. Forms a microtubule-associated complex with POC5, CETN2 and POC1B. Interacts with CCDC15. Isoform 1 and isoform 3 are widely expressed with highest levels in retina and testis, with isoform 1 being the most abundant in all tissues tested.

Its subcellular location is the cytoplasm. It localises to the cytoskeleton. It is found in the cilium basal body. The protein resides in the cell projection. The protein localises to the cilium. Its subcellular location is the microtubule organizing center. It localises to the centrosome. It is found in the centriole. Involved in ciliogenesis. This is Protein FAM161A (FAM161A) from Homo sapiens (Human).